A 339-amino-acid chain; its full sequence is Dihydroorotate dehydrogenase (quinone) (339 aa).

Residues 61 to 65 (AGLDK) and T85 contribute to the FMN site. K65 contacts substrate. 110–114 (NRMGF) is a binding site for substrate. The FMN site is built by N138 and N171. N171 is a binding site for substrate. Residue S174 is the Nucleophile of the active site. N176 serves as a coordination point for substrate. FMN is bound by residues K216 and T244. Position 245–246 (245–246 (NT)) interacts with substrate. FMN-binding positions include G267, G296, and 317–318 (YS).

This sequence belongs to the dihydroorotate dehydrogenase family. Type 2 subfamily. As to quaternary structure, monomer. FMN is required as a cofactor.

The protein localises to the cell membrane. It catalyses the reaction (S)-dihydroorotate + a quinone = orotate + a quinol. It participates in pyrimidine metabolism; UMP biosynthesis via de novo pathway; orotate from (S)-dihydroorotate (quinone route): step 1/1. Its function is as follows. Catalyzes the conversion of dihydroorotate to orotate with quinone as electron acceptor. This Pseudomonas fluorescens (strain ATCC BAA-477 / NRRL B-23932 / Pf-5) protein is Dihydroorotate dehydrogenase (quinone).